Consider the following 923-residue polypeptide: MLIFYAKYAFIFWFFVGSNQGEMLLMDKISHDKTLLNVTACTQNCLEKGQMDFRSCLKDCRINGTFPGALRKVQENYQMNMICRTESEIVFQIDWVQHSRGTEPAPNATYIIRVDAVKDDNKETALYLSDDNFLILPGLESNSTHNITALAMHGDGSYSLIAKDQTFATLIRGYQPSKMGAVNLLRFVPQPDDLHHIAAEIEWKPSAESNCYFDMVSYSTNSVNMDEPLEVQFRDRKKLYRHTVDNLEFDKQYHVGVRTVNIMNRLESDLQWLPIAVPSCLDWYPYNYTLCPPHKPENLTVTQKQYLPNILALNITWARPRYLPDNYTLHIFDLFKGGTELNYTLDQNRSHFYVPKITVLGSHFEVHLVAQSAGGKNVSGLTLDKVHRGVLLSEGNMVKLVLFIIVPICCILMLCSLTFCRRNRSEVQALQMDAKDAKASEFHLSLMDSSGLLVTLSANESLEVMDELEVEPHSVLLQDVLGEGAFGLVRRGVYKKRQVAVKLLKDEPNDEDVYAFKCEIQMLKAVGKHPNIVGIVGYSTRFSNQMMLLIEYCSLGSLQNFLREEWKFRQEQNAIGLKKNLEQNVDNRRFNRLPRNSIHDRIEDINNSMLSTVEEESESDQTHSSRCETYTLTRITNAADNKGYGLEDIENIGGSYIPKTAEAPKDRPKRKLKPQPKKDSKQDFKSDNKKRIFENKEYFDCLDSSDTKPRIPLKYADLLDIAQQVAVGMEFLAQNKVVHRDLAARNVLISVDRSIKIADFGLSRDVYHENVYRKSGGSGKLPIKWLALESLTHQVYTSQSDVWSFGVLLYEITTLGGMPYPSVSPSDLLQLLRQGHRMKRPEGCTQEMFSLMESCWSSVPSHRPTFSALKHRLGGMILATNDVPERLKQLQAATESKLKSCDGLNSKVEQVPCEEELYLEPLN.

The signal sequence occupies residues 1–20 (MLIFYAKYAFIFWFFVGSNQ). Residues 21–399 (GEMLLMDKIS…VLLSEGNMVK (379 aa)) are Extracellular-facing. 12 N-linked (GlcNAc...) asparagine glycosylation sites follow: N37, N63, N107, N142, N146, N287, N298, N314, N326, N342, N348, and N377. The chain crosses the membrane as a helical span at residues 400–420 (LVLFIIVPICCILMLCSLTFC). Topologically, residues 421–923 (RRNRSEVQAL…EEELYLEPLN (503 aa)) are cytoplasmic. The region spanning 475–874 (VLLQDVLGEG…TFSALKHRLG (400 aa)) is the Protein kinase domain. Residues 481 to 489 (LGEGAFGLV) and K502 each bind ATP. At S608 the chain carries Phosphoserine. The interval 656 to 687 (YIPKTAEAPKDRPKRKLKPQPKKDSKQDFKSD) is disordered. Residues 676–687 (PKKDSKQDFKSD) are compositionally biased toward basic and acidic residues. D741 functions as the Proton acceptor in the catalytic mechanism.

It belongs to the protein kinase superfamily. Tyr protein kinase family. It depends on Mg(2+) as a cofactor. Post-translationally, may be auto-phosphorylated on tyrosine residues.

It localises to the membrane. It carries out the reaction L-tyrosyl-[protein] + ATP = O-phospho-L-tyrosyl-[protein] + ADP + H(+). In terms of biological role, probable receptor tyrosine kinase which is required for determination of anterior and posterior terminal structures in the embryo. During postembryonic development, involved in the initiation of metamorphosis probably by inducing the production of ecdysone in response to prothoracicotropic hormone Ptth. Binding to Ptth stimulates activation of canonical MAPK signaling leading to ERK phosphorylation. The protein is Tyrosine-protein kinase receptor torso (tor) of Drosophila melanogaster (Fruit fly).